We begin with the raw amino-acid sequence, 277 residues long: MGNGVQPLDPVAIQIGSISVKWYGVIIASAVVIALLLALSEANKRKMDKEIIVDLLIWAIPISIISARIYYVIFEWDFYKNNLGEIVKIWHGGIAIYGALIGAVLTAIIFSRIKKISFWQLADVVAPSLIIAQAIGRWGNFMNQEAHGAETTRAFLEGLHLPDFIINQMYIDGAYYQPTFLYESLWNVLGFIILLIIRRTKIRRGELFLGYVIWYSFGRFFIEGMRTDSLMWGDFRVSQVLSLLLIVLSIGIIIYRRVKMNPPYYMEDKFGKVVKKK.

4 helical membrane passes run 18–38, 51–71, 89–109, and 116–136; these read ISVK…LLLA, IIVD…RIYY, IWHG…TAII, and ISFW…QAIG. A 1,2-diacyl-sn-glycero-3-phospho-(1'-sn-glycerol) is bound at residue Arg137. 3 helical membrane-spanning segments follow: residues 177 to 197, 205 to 225, and 235 to 255; these read QPTF…LLII, GELF…IEGM, and FRVS…IIIY.

It belongs to the Lgt family.

Its subcellular location is the cell membrane. The enzyme catalyses L-cysteinyl-[prolipoprotein] + a 1,2-diacyl-sn-glycero-3-phospho-(1'-sn-glycerol) = an S-1,2-diacyl-sn-glyceryl-L-cysteinyl-[prolipoprotein] + sn-glycerol 1-phosphate + H(+). The protein operates within protein modification; lipoprotein biosynthesis (diacylglyceryl transfer). In terms of biological role, catalyzes the transfer of the diacylglyceryl group from phosphatidylglycerol to the sulfhydryl group of the N-terminal cysteine of a prolipoprotein, the first step in the formation of mature lipoproteins. The sequence is that of Phosphatidylglycerol--prolipoprotein diacylglyceryl transferase from Listeria monocytogenes serotype 4a (strain HCC23).